The primary structure comprises 783 residues: Endonuclease MutS2 (783 aa).

Residue 337–344 coordinates ATP; sequence GPNTGGKT. The 76-residue stretch at 708–783 folds into the Smr domain; sequence LHLRGYRYEE…GFGVTVAELK (76 aa).

It belongs to the DNA mismatch repair MutS family. MutS2 subfamily. Homodimer. Binds to stalled ribosomes, contacting rRNA.

In terms of biological role, endonuclease that is involved in the suppression of homologous recombination and thus may have a key role in the control of bacterial genetic diversity. Functionally, acts as a ribosome collision sensor, splitting the ribosome into its 2 subunits. Detects stalled/collided 70S ribosomes which it binds and splits by an ATP-hydrolysis driven conformational change. Acts upstream of the ribosome quality control system (RQC), a ribosome-associated complex that mediates the extraction of incompletely synthesized nascent chains from stalled ribosomes and their subsequent degradation. Probably generates substrates for RQC. This chain is Endonuclease MutS2, found in Staphylococcus haemolyticus (strain JCSC1435).